Reading from the N-terminus, the 228-residue chain is UPF0758 protein CTC_02075 (228 aa).

Residues 106-228 (NITNPKDAAY…YISLKEKDIL (123 aa)) enclose the MPN domain. Residues H177, H179, and D190 each coordinate Zn(2+). Positions 177-190 (HNHPSGDTTPSKED) match the JAMM motif motif.

The protein belongs to the UPF0758 family.

In Clostridium tetani (strain Massachusetts / E88), this protein is UPF0758 protein CTC_02075.